The primary structure comprises 302 residues: Lysosomal thioesterase PPT2 (302 aa).

A signal peptide spans 1–27; the sequence is MPGLWRQRLPSAWALLLLPFLPLLMPA. The N-linked (GlcNAc...) asparagine glycan is linked to asparagine 60. 2 disulfide bridges follow: cysteine 109/cysteine 117 and cysteine 165/cysteine 176. The active-site Nucleophile is serine 111. Residues asparagine 190 and asparagine 206 are each glycosylated (N-linked (GlcNAc...) asparagine). Aspartate 228 is a catalytic residue. Asparagine 245 carries N-linked (GlcNAc...) asparagine glycosylation. Cysteine 276 and cysteine 296 are disulfide-bonded. Residue histidine 283 is part of the active site. N-linked (GlcNAc...) asparagine glycosylation is present at asparagine 289.

This sequence belongs to the palmitoyl-protein thioesterase family. Expressed throughout the brain, primarily in neurons, and at lower levels in glial cells.

It localises to the lysosome. The catalysed reaction is hexadecanoyl-CoA + H2O = hexadecanoate + CoA + H(+). The enzyme catalyses S-hexadecanoyl-N-acetylcysteamine + H2O = N-acetylcysteamine + hexadecanoate + H(+). Its function is as follows. Catalyzes the cleavage of thioester bonds from S-palmitoyl-CoA or S-palmitoyl-N-acetylcysteamine (unbranched structures) but does not have activity against palmitoylcysteine or palmitoylated proteins, branched structures or bulky head groups. Conversely, hydrolyzes both long and short chain fatty acyl-CoA substrate. The sequence is that of Lysosomal thioesterase PPT2 (Ppt2) from Mus musculus (Mouse).